We begin with the raw amino-acid sequence, 730 residues long: Wall-associated receptor kinase-like 3 (730 aa).

Positions methionine 1–alanine 25 are cleaved as a signal peptide. Residues alanine 26–valine 357 lie on the Extracellular side of the membrane. N-linked (GlcNAc...) asparagine glycosylation is found at asparagine 32, asparagine 38, asparagine 68, asparagine 90, asparagine 119, asparagine 132, asparagine 212, asparagine 233, and asparagine 269. The tract at residues cysteine 283–cysteine 340 is atypical EGF-like. 3 cysteine pairs are disulfide-bonded: cysteine 285/cysteine 298, cysteine 320/cysteine 331, and cysteine 326/cysteine 340. The chain crosses the membrane as a helical span at residues leucine 358–isoleucine 378. Residues arginine 379–serine 730 are Cytoplasmic-facing. The Protein kinase domain occupies phenylalanine 428 to isoleucine 699. Residues leucine 434–valine 442 and lysine 456 each bind ATP. Aspartate 553 (proton acceptor) is an active-site residue. The disordered stretch occupies residues proline 703–serine 730. The segment covering asparagine 712–leucine 721 has biased composition (acidic residues).

This sequence belongs to the protein kinase superfamily. Ser/Thr protein kinase family. As to expression, preferentially expressed in roots and flowers.

The protein resides in the membrane. It catalyses the reaction L-seryl-[protein] + ATP = O-phospho-L-seryl-[protein] + ADP + H(+). It carries out the reaction L-threonyl-[protein] + ATP = O-phospho-L-threonyl-[protein] + ADP + H(+). In terms of biological role, serine/threonine-protein kinase that may function as a signaling receptor of extracellular matrix component. In Arabidopsis thaliana (Mouse-ear cress), this protein is Wall-associated receptor kinase-like 3 (WAKL3).